The following is a 397-amino-acid chain: Elongation factor Tu (397 aa).

The tr-type G domain maps to 10 to 207 (KPHVNVGTIG…TLDTYIPEPE (198 aa)). Residues 19-26 (GHVDHGKT) form a G1 region. 19-26 (GHVDHGKT) serves as a coordination point for GTP. Mg(2+) is bound at residue T26. The interval 60 to 64 (GITIN) is G2. A G3 region spans residues 81 to 84 (DCPG). GTP-binding positions include 81 to 85 (DCPGH) and 136 to 139 (NKAD). The tract at residues 136 to 139 (NKAD) is G4. Residues 174 to 176 (SAL) form a G5 region.

Belongs to the TRAFAC class translation factor GTPase superfamily. Classic translation factor GTPase family. EF-Tu/EF-1A subfamily. In terms of assembly, monomer.

The protein localises to the cytoplasm. The enzyme catalyses GTP + H2O = GDP + phosphate + H(+). Its function is as follows. GTP hydrolase that promotes the GTP-dependent binding of aminoacyl-tRNA to the A-site of ribosomes during protein biosynthesis. The polypeptide is Elongation factor Tu (Pseudomonas fluorescens (strain ATCC BAA-477 / NRRL B-23932 / Pf-5)).